We begin with the raw amino-acid sequence, 88 residues long: Sec-independent protein translocase protein TatA (88 aa).

The chain crosses the membrane as a helical span at residues 3–23 (IFGVGLPEVTVILILALLIFG). A compositionally biased stretch (basic and acidic residues) spans 56-66 (MKEEDKDESPK). The segment at 56–88 (MKEEDKDESPKSIESNQSNEINQEKIDSENSNN) is disordered. Polar residues predominate over residues 67–76 (SIESNQSNEI). The span at 77 to 88 (NQEKIDSENSNN) shows a compositional bias: basic and acidic residues.

The protein belongs to the TatA/E family. As to quaternary structure, forms a complex with TatC.

The protein localises to the cell inner membrane. Part of the twin-arginine translocation (Tat) system that transports large folded proteins containing a characteristic twin-arginine motif in their signal peptide across membranes. TatA could form the protein-conducting channel of the Tat system. This is Sec-independent protein translocase protein TatA from Prochlorococcus marinus (strain MIT 9301).